A 394-amino-acid polypeptide reads, in one-letter code: Probable glycosyltransferase FCK3 (394 aa).

The protein belongs to the afumC glycosyltransferase family.

The protein operates within secondary metabolite biosynthesis. Functionally, probable glycosyl transferase; part of the gene cluster that mediates the biosynthesis of cytokinins such as fusatin, fusatinic acids or 8-oxofusatin, known for their growth promoting and anti-senescence activities toward host plants. FCK1 is a bifunctional enzyme that performs the first steps in the biosynthesis of Fusarium cytokinins. It first condenses adenosine monophosphate (AMP) with dimethylallyl diphosphate (DMAPP) to yield isoprenyl adenosine monophosphate. It then catalyzes the removal of the phosphoribose to produce isopentenylaldehyde. The cytochrome P450 monooxygenase then converts isopentenylaldehyde to trans-zeatin. A condensation step converts trans-zeatin to fusatin which is further modified to produce fusatinic acid. The mechanism for oxidation of fusatin to fusatinic acid remains unknown. 8-oxofusatin could be produced through several pathways, via direct oxygenation of fusatin, or via the 8-oxo-pentenyladenine intermediate which itself must arise from either the prenylation of 8-oxo-AMP by FCK1 and/or oxygenation of isopentenylaldehyde. Both the FCK3 and FCK4 enzymes act downstream of the identified cytokinins to produce yet unidentified compounds. This is Probable glycosyltransferase FCK3 from Fusarium pseudograminearum (strain CS3096) (Wheat and barley crown-rot fungus).